We begin with the raw amino-acid sequence, 256 residues long: Hydroxyethylthiazole kinase (256 aa).

A substrate-binding site is contributed by Met37. ATP is bound by residues Lys113 and Thr159. Gly186 is a binding site for substrate.

This sequence belongs to the Thz kinase family. Mg(2+) is required as a cofactor.

It carries out the reaction 5-(2-hydroxyethyl)-4-methylthiazole + ATP = 4-methyl-5-(2-phosphooxyethyl)-thiazole + ADP + H(+). It participates in cofactor biosynthesis; thiamine diphosphate biosynthesis; 4-methyl-5-(2-phosphoethyl)-thiazole from 5-(2-hydroxyethyl)-4-methylthiazole: step 1/1. Its function is as follows. Catalyzes the phosphorylation of the hydroxyl group of 4-methyl-5-beta-hydroxyethylthiazole (THZ). This is Hydroxyethylthiazole kinase from Exiguobacterium sibiricum (strain DSM 17290 / CCUG 55495 / CIP 109462 / JCM 13490 / 255-15).